A 157-amino-acid polypeptide reads, in one-letter code: uncharacterized protein (157 aa).

Disordered regions lie at residues 76 to 105 and 132 to 157; these read AINQ…GPRG and VRAP…RMRG. Residues 135-148 show a composition bias toward low complexity; sequence PSTKPSKTSSSNNP.

It to M.pneumoniae MPN_091 and MPN_413.

This is an uncharacterized protein from Mycoplasma pneumoniae (strain ATCC 29342 / M129 / Subtype 1) (Mycoplasmoides pneumoniae).